Here is a 312-residue protein sequence, read N- to C-terminus: Ribosomal RNA small subunit methyltransferase H (312 aa).

S-adenosyl-L-methionine-binding positions include 35–37 (GGH), Asp-55, Phe-85, Asp-101, and Gln-108.

This sequence belongs to the methyltransferase superfamily. RsmH family.

The protein resides in the cytoplasm. It catalyses the reaction cytidine(1402) in 16S rRNA + S-adenosyl-L-methionine = N(4)-methylcytidine(1402) in 16S rRNA + S-adenosyl-L-homocysteine + H(+). Specifically methylates the N4 position of cytidine in position 1402 (C1402) of 16S rRNA. The polypeptide is Ribosomal RNA small subunit methyltransferase H (Buchnera aphidicola subsp. Acyrthosiphon pisum (strain Tuc7)).